We begin with the raw amino-acid sequence, 159 residues long: MRCPYCQSEDTQVKDSRPAEDGAAIRRRRVCPDCGGRFTTFERVQLRDLVVVKKSGRKVPFDRDKLLRSVEIAVRKRNVDPERIDRAVTGIVRQLESSGETEVASGEVGRLVMEALKSLDDVAYVRFASVYRNFREAKDFHELLGELKGDEDKSEEDAG.

Residues 3-34 (CPYCQSEDTQVKDSRPAEDGAAIRRRRVCPDC) fold into a zinc finger. The ATP-cone domain occupies 49-139 (LVVVKKSGRK…VYRNFREAKD (91 aa)).

It belongs to the NrdR family. Zn(2+) serves as cofactor.

Functionally, negatively regulates transcription of bacterial ribonucleotide reductase nrd genes and operons by binding to NrdR-boxes. The chain is Transcriptional repressor NrdR from Mesorhizobium japonicum (strain LMG 29417 / CECT 9101 / MAFF 303099) (Mesorhizobium loti (strain MAFF 303099)).